The following is a 398-amino-acid chain: MNIHEYQAKELLKSYGVAVLDGHVAWTGEEAAEAARKLPGPVYVVKSQIHAGGRGAGHFKDDPEGKGGVRLAKSPEEVAAAAEAMLGNTLVTKQTGPAGRVVRRVYVEAGCDIKRELYLSLLVDRAKSEIVIMASTEGGMEIEEVAEKHPEKILRVAVDPASGISGFHARRLGFGLGLDATQMKAFAKFVNAMYKAFVALDCAIVEINPLVVTGAGEVVALDAKVSFDDNALYRHPDLEKLRDEAEEDPKELEAAKHSLNYVALDGSIGCMVNGAGLAMATMDIIKLYGAEPANFLDVGGGATKERVTAAFKIILSDPNVEGILVNIFGGIMRCDVIAEGVVAAAREVSLSVPLVVRLEGTNVQLGKDILSKSGLPIIAADNLADAAQKIVAAVKEAA.

One can recognise an ATP-grasp domain in the interval 9 to 253 (KELLKSYGVA…EAEEDPKELE (245 aa)). ATP contacts are provided by residues K46, 53 to 55 (GRG), E108, C111, and E116. Residues N208 and D222 each contribute to the Mg(2+) site. Residues N273 and 330–332 (GIM) contribute to the substrate site.

It belongs to the succinate/malate CoA ligase beta subunit family. In terms of assembly, heterotetramer of two alpha and two beta subunits. Mg(2+) serves as cofactor.

It carries out the reaction succinate + ATP + CoA = succinyl-CoA + ADP + phosphate. The catalysed reaction is GTP + succinate + CoA = succinyl-CoA + GDP + phosphate. It participates in carbohydrate metabolism; tricarboxylic acid cycle; succinate from succinyl-CoA (ligase route): step 1/1. Its function is as follows. Succinyl-CoA synthetase functions in the citric acid cycle (TCA), coupling the hydrolysis of succinyl-CoA to the synthesis of either ATP or GTP and thus represents the only step of substrate-level phosphorylation in the TCA. The beta subunit provides nucleotide specificity of the enzyme and binds the substrate succinate, while the binding sites for coenzyme A and phosphate are found in the alpha subunit. The protein is Succinate--CoA ligase [ADP-forming] subunit beta of Acidiphilium cryptum (strain JF-5).